We begin with the raw amino-acid sequence, 255 residues long: 1-acyl-sn-glycerol-3-phosphate acyltransferase (255 aa).

Residues 78–83 (HVSWLD) carry the HXXXXD motif motif.

It belongs to the 1-acyl-sn-glycerol-3-phosphate acyltransferase family.

The protein localises to the cell inner membrane. It catalyses the reaction a 1-acyl-sn-glycero-3-phosphate + an acyl-CoA = a 1,2-diacyl-sn-glycero-3-phosphate + CoA. It participates in phospholipid metabolism; CDP-diacylglycerol biosynthesis; CDP-diacylglycerol from sn-glycerol 3-phosphate: step 2/3. Functionally, converts lysophosphatidic acid (LPA) into phosphatidic acid by incorporating acyl moiety at the 2 position. This chain is 1-acyl-sn-glycerol-3-phosphate acyltransferase (plsC), found in Neisseria meningitidis serogroup B (strain ATCC BAA-335 / MC58).